The primary structure comprises 330 residues: Dof zinc finger protein DOF2.4 (330 aa).

The span at 14-25 shows a compositional bias: polar residues; that stretch reads NWQQAPPSNYNH. Residues 14 to 70 form a disordered region; it reads NWQQAPPSNYNHDGTGASANGGHVLRPQLQPQQQPQQQPHPNGSGGGGGGGGGSIRA. The span at 40–55 shows a compositional bias: low complexity; sequence PQLQPQQQPQQQPHPN. Residues 56–68 show a composition bias toward gly residues; that stretch reads GSGGGGGGGGGSI. Residues 89-143 form a Dof-type zinc finger; the sequence is LKCPRCESTNTKFCYFNNYSLTQPRHFCKTCRRYWTRGGALRNVPVGGGCRRNRR. Zn(2+)-binding residues include Cys91, Cys94, Cys116, and Cys119. Disordered stretches follow at residues 133–165 and 255–276; these read PVGG…SFSS and QQSS…SANG. The segment covering 146–165 has biased composition (low complexity); the sequence is SNSNNNNNSTATSNNTSFSS. Positions 265–276 are enriched in polar residues; that stretch reads EDSSNPNPSANG.

In terms of tissue distribution, specific to the vascular tissues. The PEAR proteins (e.g. DOF2.4, DOF5.1, DOF3.2, DOF1.1, DOF5.6 and DOF5.3) form a short-range concentration gradient that peaks at protophloem sieve elements (PSE).

The protein resides in the nucleus. It localises to the symplast. Transcription factor that binds specifically to a 5'-AA[AG]G-3' consensus core sequence. Probably involved in early processes for vascular development. The PEAR proteins (e.g. DOF2.4, DOF5.1, DOF3.2, DOF1.1, DOF5.6 and DOF5.3) activate gene expression that promotes radial growth of protophloem sieve elements. Triggers the transcription of HD-ZIP III genes, especially in the central domain of vascular tissue. The chain is Dof zinc finger protein DOF2.4 from Arabidopsis thaliana (Mouse-ear cress).